The following is a 405-amino-acid chain: Argininosuccinate synthase (405 aa).

ATP contacts are provided by residues 10-18 (AFSGGLDTS) and Ala37. Residues Tyr90 and Ser95 each contribute to the L-citrulline site. Residue Gly120 coordinates ATP. Positions 122, 126, and 127 each coordinate L-aspartate. Residue Asn126 coordinates L-citrulline. Positions 130, 181, 190, 266, and 278 each coordinate L-citrulline.

It belongs to the argininosuccinate synthase family. Type 1 subfamily. In terms of assembly, homotetramer.

The protein resides in the cytoplasm. It carries out the reaction L-citrulline + L-aspartate + ATP = 2-(N(omega)-L-arginino)succinate + AMP + diphosphate + H(+). The protein operates within amino-acid biosynthesis; L-arginine biosynthesis; L-arginine from L-ornithine and carbamoyl phosphate: step 2/3. The protein is Argininosuccinate synthase of Rhizorhabdus wittichii (strain DSM 6014 / CCUG 31198 / JCM 15750 / NBRC 105917 / EY 4224 / RW1) (Sphingomonas wittichii).